A 117-amino-acid chain; its full sequence is Toxin CSTX-12 (117 aa).

The signal sequence occupies residues Met-1 to Ala-20. The propeptide occupies Glu-21 to Arg-47. 4 disulfides stabilise this stretch: Cys-50–Cys-65, Cys-57–Cys-74, Cys-64–Cys-95, and Cys-76–Cys-93. Positions Arg-82–Arg-87 are excised as a propeptide. Ala-116 bears the Alanine amide mark.

The protein belongs to the neurotoxin 19 (CSTX) family. 12 subfamily. In terms of assembly, heterodimer of A and B chains; disulfide-linked. Interacts with CSTX-1 (AC P81694), and with CSTX-9 (AC P58604). Expressed by the venom gland.

It localises to the secreted. The protein resides in the target cell membrane. Its function is as follows. Synergistic toxin that induces or increases a cytolytic effect when combined with CSTX-1 (AC P81694) or CSTX-9 (AC P58604). When alone, has a weak insecticidal activity, with an unknown molecular target. The polypeptide is Toxin CSTX-12 (Cupiennius salei (American wandering spider)).